Consider the following 499-residue polypeptide: MTDKVRNRVQCWPALAQESSCVDFIPARQGATCGSTVVFIPCCGLTRGRRVLCQWFPCLSGGCCSQESSCVDFIPARQGATCGSTVVFIPCCGLTRGRRVLCQWFPCLSGGCCSQHTVNIIGEPPRPVGAPSFEFVEFGRLPSILSTELKLFQRAPVPEDFGIYYEGNADIARQRWTGGEAKALELLGRRLKQEEEAFREGYYLPTQARPDFLAPPSSMSAALRFGCLSVRMFYWCVHDLFARVQANNQLKHPGGHHITGQLIWREYFYTMSVHNPHYAVMELNPICLNIPWYEAKDDSLDRWKEGRTGFPLIDAAMRQLMAEGWLHHILRNITATFLTRGGLWISWEAGVQHFLKYLLDADWSVCAGNWMWVSSSAFEKLLDSSSCTSPVALARRLDPKGEYVKRYLPELEKFPALYVHEPWKAPPELQEQYGCVIGKDYPAPMVNLAEVNKCNANKMNAIRQKLLDQGGSTPAHCRPSDMDEVRQFFWLPEDVAAES.

FAD contacts are provided by residues Arg190, Ser218, Ser220, Gln261, His328, Asp360 to Asp362, Cys366, and Asn369.

Belongs to the DNA photolyase class-1 family. Interacts with tim and per; promoted by light conditions. FAD is required as a cofactor.

Its subcellular location is the cytoplasm. The protein resides in the perinuclear region. It is found in the nucleus. Functionally, blue light-dependent regulator that is the input of the circadian feedback loop. Has no photolyase activity for cyclobutane pyrimidine dimers or 6-4 photoproducts. Regulation of expression by light suggests a role in photoreception for locomotor activity rhythms. Functions, together with per, as a transcriptional repressor required for the oscillation of peripheral circadian clocks and for the correct specification of clock cells. Genes directly activated by the transcription factors Clock (Clk) and cycle (cyc) are repressed by cry. This Culex quinquefasciatus (Southern house mosquito) protein is Cryptochrome-1.